We begin with the raw amino-acid sequence, 776 residues long: Angiomotin-like protein 2 (776 aa).

The disordered stretch occupies residues glycine 41–glutamate 88. The required for interaction with CDH5 stretch occupies residues glycine 101–glycine 307. Tyrosine 107 is subject to Phosphotyrosine. Disordered regions lie at residues alanine 119–serine 142, arginine 169–histidine 215, and glycine 283–alanine 309. The segment covering histidine 177–glutamine 192 has biased composition (polar residues). Over residues proline 196–tyrosine 213 the composition is skewed to pro residues. A required for interaction with CDH1 region spans residues histidine 220–glycine 307. Residues alanine 297 to serine 306 are compositionally biased toward polar residues. 2 coiled-coil regions span residues methionine 314–arginine 509 and alanine 543–lysine 570. Residues lysine 347 and lysine 408 each participate in a glycyl lysine isopeptide (Lys-Gly) (interchain with G-Cter in ubiquitin) cross-link. Disordered stretches follow at residues glutamine 591 to histidine 620 and threonine 677 to aspartate 743. The segment covering glutamine 678–glutamate 687 has biased composition (polar residues). Phosphoserine occurs at positions 756 and 759. The PDZ-binding signature appears at glutamate 773 to isoleucine 776.

It belongs to the angiomotin family. In terms of assembly, part of a complex composed of AMOTL2, MAGI1 and CDH5, within the complex AMOTL2 acts as a scaffold protein for the interaction of MAGI1 with CDH5. The complex is required for coupling actin fibers to cell junctions in endothelial cells. Within the complex AMOTL2 (via its N-terminus) interacts with CDH5. Interacts (via N-terminus) with MAGI1. Interacts (via N-terminus) with ACTB; the interaction facilitates binding of cell junction complexes to actin fibers in endothelial cells. Interacts with CDH1; the interaction may facilitate binding of radial actin fibers to cell junction complexes. Interacts with SRC. Interacts with YAP1; the interaction is required for ubiquitination of AMOTL2 and localization of YAP1 to tight junctions. Interacts with WWP1; the interaction facilitates WWP1 interaction with the Crumbs complex and subsequent WWP1 translocation to the plasma membrane. WPP1 interaction with the Crumbs complex promotes WPP1 monoubiquitination of AMOTL2 which subsequently activates the Hippo signaling pathway. When ubiquitinated interacts with LATS2 (via UBA domain); the interaction promotes LATS2 phosphorylation of YAP1. Interacts (via PPXY motif) with WWTR1/TAZ (via WW domain); the interaction promotes WWTR1/TAZ localization to the cytoplasm and thereby inhibition of its transcriptional properties. Interacts with PHLDB2; interaction may facilitate PHLDB2 localization to the myotube podosome cortex that surrounds the core. Monoubiquitinated at Lys-347 and Lys-408 by Crumbs complex-bound WWP1. De-ubiquitinated at Lys-347 and Lys-408 by USP9X; the interaction may be promoted by cell contact inhibition. Deubiquitination of AMOTL2 negatively regulates Hippo signaling activation. In terms of processing, phosphorylation at Tyr-107 is necessary for efficient binding to SRC and synergistically functioning with SRC to activate the downstream MAPK pathway.

The protein resides in the recycling endosome. The protein localises to the cytoplasm. It localises to the cell projection. Its subcellular location is the podosome. It is found in the cell junction. Regulates the translocation of phosphorylated SRC to peripheral cell-matrix adhesion sites. Required for proper architecture of actin filaments. Plays a role in coupling actin fibers to cell junctions in endothelial cells and is therefore required for correct endothelial cell morphology via facilitating transcellular transmission of mechanical force resulting in endothelial cell elongation. Required for the anchoring of radial actin fibers to CDH1 junction complexes at the cell membrane which facilitates organization of radial actin fiber structure and cellular response to contractile forces. This contributes to maintenance of cell area, size, shape, epithelial sheet organization and trophectoderm cell properties that facilitate blastocyst zona hatching. Inhibits the Wnt/beta-catenin signaling pathway, probably by recruiting CTNNB1 to recycling endosomes and hence preventing its translocation to the nucleus. Participates in angiogenesis. Activates the Hippo signaling pathway in response to cell contact inhibition via interaction with and ubiquitination by Crumbs complex-bound WWP1. Ubiquitinated AMOTL2 then interacts with LATS2 which in turn phosphorylates YAP1, excluding it from the nucleus and localizing it to the cytoplasm and tight junctions, therefore ultimately repressing YAP1-driven transcription of target genes. Acts to inhibit WWTR1/TAZ transcriptional coactivator activity via sequestering WWTR1/TAZ in the cytoplasm and at tight junctions. Regulates the size and protein composition of the podosome cortex and core at myofibril neuromuscular junctions. Selectively promotes FGF-induced MAPK activation through SRC. May play a role in the polarity, proliferation and migration of endothelial cells. The protein is Angiomotin-like protein 2 of Canis lupus familiaris (Dog).